Consider the following 833-residue polypeptide: Phenylalanine--tRNA ligase beta subunit (833 aa).

The 116-residue stretch at 42 to 157 (ADLKGPLAVG…PEYEVGTDAI (116 aa)) folds into the tRNA-binding domain. The B5 domain occupies 411–485 (SAPHTITIPA…RLEGYENLPS (75 aa)). The Mg(2+) site is built by Asp-463, Asp-469, Glu-472, and Glu-473. Residues 739-832 (STFPVATQDV…AAERTGAALR (94 aa)) enclose the FDX-ACB domain.

Belongs to the phenylalanyl-tRNA synthetase beta subunit family. Type 1 subfamily. As to quaternary structure, tetramer of two alpha and two beta subunits. Mg(2+) is required as a cofactor.

The protein localises to the cytoplasm. The catalysed reaction is tRNA(Phe) + L-phenylalanine + ATP = L-phenylalanyl-tRNA(Phe) + AMP + diphosphate + H(+). The chain is Phenylalanine--tRNA ligase beta subunit from Streptomyces avermitilis (strain ATCC 31267 / DSM 46492 / JCM 5070 / NBRC 14893 / NCIMB 12804 / NRRL 8165 / MA-4680).